The sequence spans 156 residues: Ribosomal RNA large subunit methyltransferase H (156 aa).

S-adenosyl-L-methionine contacts are provided by residues leucine 74, glycine 105, and 124-129 (LSKLTL).

It belongs to the RNA methyltransferase RlmH family. Homodimer.

It localises to the cytoplasm. The enzyme catalyses pseudouridine(1915) in 23S rRNA + S-adenosyl-L-methionine = N(3)-methylpseudouridine(1915) in 23S rRNA + S-adenosyl-L-homocysteine + H(+). Functionally, specifically methylates the pseudouridine at position 1915 (m3Psi1915) in 23S rRNA. This chain is Ribosomal RNA large subunit methyltransferase H, found in Legionella pneumophila (strain Lens).